The chain runs to 378 residues: D-alanine--D-alanine ligase (378 aa).

The region spanning 140-346 (KKIISQAGIR…YSDLIDRLIQ (207 aa)) is the ATP-grasp domain. ATP is bound at residue 170–225 (EEKLGNLTFVKPAKQGSSVGIHRVTNAEEYEKALDDAFKYDYKILVEQGIANPQEI). 3 residues coordinate Mg(2+): D300, E313, and N315.

It belongs to the D-alanine--D-alanine ligase family. Mg(2+) is required as a cofactor. Requires Mn(2+) as cofactor.

It is found in the cytoplasm. The enzyme catalyses 2 D-alanine + ATP = D-alanyl-D-alanine + ADP + phosphate + H(+). Its pathway is cell wall biogenesis; peptidoglycan biosynthesis. Its function is as follows. Cell wall formation. This chain is D-alanine--D-alanine ligase, found in Limosilactobacillus reuteri (strain DSM 20016) (Lactobacillus reuteri).